A 550-amino-acid chain; its full sequence is C-type lectin domain family 4 member F (550 aa).

Over 1–42 the chain is Cytoplasmic; that stretch reads MKEAELNRDVAKFCTDNQCVILQPQGLGPKSAAPMAPRTLRH. A helical; Signal-anchor for type II membrane protein transmembrane segment spans residues 43–69; that stretch reads VQAIVALVVVTVFFSLLALFVVVLQPW. Residues 70–550 are Extracellular-facing; it reads RQKQNEDHPV…DWSVARTDQS (481 aa). N87, N93, N115, N132, N209, and N255 each carry an N-linked (GlcNAc...) asparagine glycan. Residues 438–538 form the C-type lectin domain; it reads NFCVSQGAHL…GTAYNWVCKK (101 aa). 2 disulfide bridges follow: C440-C536 and C516-C528.

As to expression, kupffer cells.

Its subcellular location is the membrane. Its function is as follows. Receptor with an affinity for galactose and fucose. Could be involved in endocytosis. The chain is C-type lectin domain family 4 member F (Clec4f) from Rattus norvegicus (Rat).